Consider the following 547-residue polypeptide: Nitrate transporter 2.1 (547 aa).

A run of 12 helical transmembrane segments spans residues 53–73 (WICF…APII), 86–106 (NAGV…GIVV), 113–133 (YGAA…ALVT), 143–163 (FFIG…GTMF), 173–193 (AIAA…MPLI), 211–231 (AFFV…LLGI), 262–280 (LGNY…SFGV), 296–316 (FGLN…MNLF), 338–358 (IWAL…LGKV), 366–386 (IVIM…HFGI), 400–420 (GLVG…WFAG), and 433–453 (GFVY…FIWF).

The protein belongs to the major facilitator superfamily. Nitrate/nitrite porter (TC 2.A.1.8) family.

It localises to the cell membrane. Nitrite transport mediated by system 1 is very sensitive to inhibition by nitrate. In terms of biological role, involved in nitrate transport, but does not seem to be able to mediate transport by its own. Acts as a dual component transporter with NAR2 (system 1). Imports nitrate with high affinity when expressed with NAR2 in a heterologous system (Xenopus oocytes). Involved in a high affinity and a high capacity transport specific for both nitrate and nitrite. The sequence is that of Nitrate transporter 2.1 from Chlamydomonas reinhardtii (Chlamydomonas smithii).